The sequence spans 520 residues: 2-isopropylmalate synthase (520 aa).

One can recognise a Pyruvate carboxyltransferase domain in the interval 12–274; that stretch reads IRIFDTTLRD…DTAINTPRIV (263 aa). 4 residues coordinate Mn(2+): Asp-21, His-209, His-211, and Asn-245. Positions 396 to 520 are regulatory domain; the sequence is RLASMTISDV…VVAGKTAAVA (125 aa).

It belongs to the alpha-IPM synthase/homocitrate synthase family. LeuA type 1 subfamily. Homodimer. It depends on Mn(2+) as a cofactor.

Its subcellular location is the cytoplasm. It carries out the reaction 3-methyl-2-oxobutanoate + acetyl-CoA + H2O = (2S)-2-isopropylmalate + CoA + H(+). Its pathway is amino-acid biosynthesis; L-leucine biosynthesis; L-leucine from 3-methyl-2-oxobutanoate: step 1/4. In terms of biological role, catalyzes the condensation of the acetyl group of acetyl-CoA with 3-methyl-2-oxobutanoate (2-ketoisovalerate) to form 3-carboxy-3-hydroxy-4-methylpentanoate (2-isopropylmalate). This Xanthomonas campestris pv. campestris (strain B100) protein is 2-isopropylmalate synthase.